The following is a 470-amino-acid chain: Argininosuccinate lyase (470 aa).

The protein belongs to the lyase 1 family. Argininosuccinate lyase subfamily.

Its subcellular location is the cytoplasm. The catalysed reaction is 2-(N(omega)-L-arginino)succinate = fumarate + L-arginine. The protein operates within amino-acid biosynthesis; L-arginine biosynthesis; L-arginine from L-ornithine and carbamoyl phosphate: step 3/3. This Mycobacterium marinum (strain ATCC BAA-535 / M) protein is Argininosuccinate lyase.